A 143-amino-acid polypeptide reads, in one-letter code: Agaricus bisporus lectin (143 aa).

Beta-D-Gal-(1-&gt;3)-alpha-D-GalNAc-binding residues include A29, S48, G49, and N73. N-acetyl-beta-D-glucosamine-binding residues include T82, R103, and Y114.

The protein belongs to the fungal fruit body lectin family. As to quaternary structure, homotetramer.

Its function is as follows. Lectin that recognizes O-linked galactose-beta-1,3-N-acetylgalactosamine, a disaccharide (Thomsen-Friedenreich antigen or T-disaccharide), present on cell surface glycoproteins. Can also bind galactose-beta-1,3-N-acetylglucosamine. Does not bind monosaccharides. Can be internalized by clathrin-coated vesicles after binding to surface glycoproteins. After internalization it inhibits nuclear import of nuclear localization signal dependent proteins. Inhibits proliferation of malignant cells without cytotoxicity for normal cells. The protein is Agaricus bisporus lectin of Agaricus bisporus (White button mushroom).